We begin with the raw amino-acid sequence, 427 residues long: 3-phosphoshikimate 1-carboxyvinyltransferase (427 aa).

3-phosphoshikimate-binding residues include lysine 23, serine 24, and arginine 28. A phosphoenolpyruvate-binding site is contributed by lysine 23. Phosphoenolpyruvate-binding residues include glycine 97 and arginine 125. 3-phosphoshikimate is bound by residues serine 170, serine 171, glutamine 172, serine 198, aspartate 314, asparagine 337, and lysine 341. Phosphoenolpyruvate is bound at residue glutamine 172. Aspartate 314 acts as the Proton acceptor in catalysis. Phosphoenolpyruvate contacts are provided by arginine 345, arginine 387, and lysine 412.

This sequence belongs to the EPSP synthase family. In terms of assembly, monomer.

It is found in the cytoplasm. The catalysed reaction is 3-phosphoshikimate + phosphoenolpyruvate = 5-O-(1-carboxyvinyl)-3-phosphoshikimate + phosphate. It functions in the pathway metabolic intermediate biosynthesis; chorismate biosynthesis; chorismate from D-erythrose 4-phosphate and phosphoenolpyruvate: step 6/7. Functionally, catalyzes the transfer of the enolpyruvyl moiety of phosphoenolpyruvate (PEP) to the 5-hydroxyl of shikimate-3-phosphate (S3P) to produce enolpyruvyl shikimate-3-phosphate and inorganic phosphate. In Buchnera aphidicola subsp. Acyrthosiphon pisum (strain 5A), this protein is 3-phosphoshikimate 1-carboxyvinyltransferase.